A 123-amino-acid chain; its full sequence is Potassium voltage-gated channel subfamily E member 2 (123 aa).

Asparagine 6 and asparagine 29 each carry an N-linked (GlcNAc...) asparagine glycan. A helical membrane pass occupies residues 49–69; it reads VILYLMVMIGMFAFIVVAILV. Residues 70–123 are Cytoplasmic-facing; it reads STVKSKRREHSQDPYHQYIVEDWQQKYRSQILHLEDSKATIHENLGATGFTVSP.

It belongs to the potassium channel KCNE family. Interacts with KCNB1. Associates with KCNH2/ERG1. May associate with KCNQ2 and KCNQ3. Associates with HCN1 and probably HCN2. Heteromultimer with KCNC2. Interacts with KCNC2. Interacts with KCNQ1; forms a heterooligomer complex that targets to the membrane raft and leading to currents with an apparently instantaneous activation, a rapid deactivation process and a linear current-voltage relationship and decreases the amplitude of the outward current.

Its subcellular location is the cell membrane. The protein localises to the apical cell membrane. Functionally, ancillary protein that functions as a regulatory subunit of the voltage-gated potassium (Kv) channel complex composed of pore-forming and potassium-conducting alpha subunits and of regulatory beta subunits. KCNE2 beta subunit modulates the gating kinetics and enhances stability of the channel complex. Alters the gating of the delayed rectifier Kv channel containing KCNB1 alpha subunit. Associates with KCNH2/HERG alpha subunit Kv channel to form the rapidly activating component of the delayed rectifying potassium current (IKr) in heart. May associate with KCNQ2 and/or KCNQ3 alpha subunits to modulate the native M-type current. May associate with HCN1 and HCN2 channel subunits to increase potassium current. Forms a heterooligomer complex with KCNQ1/KVLQT1 alpha subunits which leads to currents with an apparently instantaneous activation, a rapid deactivation process and a linear current-voltage relationship and decreases the amplitude of the outward current. KCNQ1-KCNE2 channel associates with Na(+)-coupled myo-inositol symporter in the apical membrane of choroid plexus epithelium and regulates the myo-inositol gradient between blood and cerebrospinal fluid with an impact on neuron excitability. The chain is Potassium voltage-gated channel subfamily E member 2 (Kcne2) from Cavia porcellus (Guinea pig).